The following is a 537-amino-acid chain: Ribonuclease Y (537 aa).

Residues 4 to 24 (FPIIMSVFAAIIGLVIGYVSV) form a helical membrane-spanning segment. Residues 112-148 (ASTLDRKDDNLSNKEKALEQKEQSLSDKSKHIDAREE) form a disordered region. The region spanning 227-287 (TNSTVHLPDD…IRREIARMTM (61 aa)) is the KH domain. An HD domain is found at 353 to 446 (VLRHSIEVAK…VAAADALSAA (94 aa)).

This sequence belongs to the RNase Y family.

It is found in the cell membrane. Functionally, endoribonuclease that initiates mRNA decay. In Streptococcus sanguinis (strain SK36), this protein is Ribonuclease Y.